Reading from the N-terminus, the 283-residue chain is NAD kinase (283 aa).

Asp-67 functions as the Proton acceptor in the catalytic mechanism. NAD(+)-binding positions include 67–68 (DG), 141–142 (ND), Arg-152, Asp-171, 182–187 (TAYSLS), and Gln-241.

This sequence belongs to the NAD kinase family. It depends on a divalent metal cation as a cofactor.

The protein localises to the cytoplasm. The enzyme catalyses NAD(+) + ATP = ADP + NADP(+) + H(+). In terms of biological role, involved in the regulation of the intracellular balance of NAD and NADP, and is a key enzyme in the biosynthesis of NADP. Catalyzes specifically the phosphorylation on 2'-hydroxyl of the adenosine moiety of NAD to yield NADP. This chain is NAD kinase, found in Heliobacterium modesticaldum (strain ATCC 51547 / Ice1).